Consider the following 307-residue polypeptide: Acetaldehyde dehydrogenase (307 aa).

12 to 15 (SGNI) is a binding site for NAD(+). C130 functions as the Acyl-thioester intermediate in the catalytic mechanism. NAD(+) is bound by residues 161 to 169 (SVGPGTRQN) and N272.

The protein belongs to the acetaldehyde dehydrogenase family.

It catalyses the reaction acetaldehyde + NAD(+) + CoA = acetyl-CoA + NADH + H(+). The protein is Acetaldehyde dehydrogenase of Shewanella pealeana (strain ATCC 700345 / ANG-SQ1).